Consider the following 273-residue polypeptide: 4-hydroxy-3-methylbut-2-enyl diphosphate reductase (273 aa).

Cys-12 contributes to the [4Fe-4S] cluster binding site. 2 residues coordinate (2E)-4-hydroxy-3-methylbut-2-enyl diphosphate: His-36 and His-70. His-36 and His-70 together coordinate dimethylallyl diphosphate. Isopentenyl diphosphate-binding residues include His-36 and His-70. Cys-92 contacts [4Fe-4S] cluster. (2E)-4-hydroxy-3-methylbut-2-enyl diphosphate is bound at residue His-120. His-120 contributes to the dimethylallyl diphosphate binding site. An isopentenyl diphosphate-binding site is contributed by His-120. Glu-122 serves as the catalytic Proton donor. (2E)-4-hydroxy-3-methylbut-2-enyl diphosphate is bound at residue Thr-157. Cys-185 is a [4Fe-4S] cluster binding site. Positions 213, 214, 215, and 257 each coordinate (2E)-4-hydroxy-3-methylbut-2-enyl diphosphate. Dimethylallyl diphosphate contacts are provided by Ser-213, Ser-214, Asn-215, and Ser-257. Residues Ser-213, Ser-214, Asn-215, and Ser-257 each coordinate isopentenyl diphosphate.

It belongs to the IspH family. The cofactor is [4Fe-4S] cluster.

It catalyses the reaction isopentenyl diphosphate + 2 oxidized [2Fe-2S]-[ferredoxin] + H2O = (2E)-4-hydroxy-3-methylbut-2-enyl diphosphate + 2 reduced [2Fe-2S]-[ferredoxin] + 2 H(+). The catalysed reaction is dimethylallyl diphosphate + 2 oxidized [2Fe-2S]-[ferredoxin] + H2O = (2E)-4-hydroxy-3-methylbut-2-enyl diphosphate + 2 reduced [2Fe-2S]-[ferredoxin] + 2 H(+). It functions in the pathway isoprenoid biosynthesis; dimethylallyl diphosphate biosynthesis; dimethylallyl diphosphate from (2E)-4-hydroxy-3-methylbutenyl diphosphate: step 1/1. It participates in isoprenoid biosynthesis; isopentenyl diphosphate biosynthesis via DXP pathway; isopentenyl diphosphate from 1-deoxy-D-xylulose 5-phosphate: step 6/6. Functionally, catalyzes the conversion of 1-hydroxy-2-methyl-2-(E)-butenyl 4-diphosphate (HMBPP) into a mixture of isopentenyl diphosphate (IPP) and dimethylallyl diphosphate (DMAPP). Acts in the terminal step of the DOXP/MEP pathway for isoprenoid precursor biosynthesis. In Helicobacter hepaticus (strain ATCC 51449 / 3B1), this protein is 4-hydroxy-3-methylbut-2-enyl diphosphate reductase.